A 457-amino-acid polypeptide reads, in one-letter code: Glutamate--tRNA ligase 1 (457 aa).

The 'HIGH' region signature appears at 9–19; it reads PSPTGYIHIGN. The short motif at 250–254 is the 'KMSKS' region element; it reads GLSKR. Lysine 253 is a binding site for ATP.

The protein belongs to the class-I aminoacyl-tRNA synthetase family. Glutamate--tRNA ligase type 1 subfamily. As to quaternary structure, monomer.

The protein localises to the cytoplasm. It carries out the reaction tRNA(Glu) + L-glutamate + ATP = L-glutamyl-tRNA(Glu) + AMP + diphosphate. In terms of biological role, catalyzes the attachment of glutamate to tRNA(Glu) in a two-step reaction: glutamate is first activated by ATP to form Glu-AMP and then transferred to the acceptor end of tRNA(Glu). The chain is Glutamate--tRNA ligase 1 from Brucella abortus (strain S19).